The chain runs to 134 residues: Flagellar basal-body rod protein FlgC (134 aa).

This sequence belongs to the flagella basal body rod proteins family. As to quaternary structure, the basal body constitutes a major portion of the flagellar organelle and consists of four rings (L,P,S, and M) mounted on a central rod. The rod consists of about 26 subunits of FlgG in the distal portion, and FlgB, FlgC and FlgF are thought to build up the proximal portion of the rod with about 6 subunits each.

The protein localises to the bacterial flagellum basal body. The polypeptide is Flagellar basal-body rod protein FlgC (flgC) (Salmonella typhi).